A 369-amino-acid polypeptide reads, in one-letter code: UDP-3-O-acylglucosamine N-acyltransferase (369 aa).

His-263 (proton acceptor) is an active-site residue.

The protein belongs to the transferase hexapeptide repeat family. LpxD subfamily. In terms of assembly, homotrimer.

It catalyses the reaction a UDP-3-O-[(3R)-3-hydroxyacyl]-alpha-D-glucosamine + a (3R)-hydroxyacyl-[ACP] = a UDP-2-N,3-O-bis[(3R)-3-hydroxyacyl]-alpha-D-glucosamine + holo-[ACP] + H(+). The protein operates within bacterial outer membrane biogenesis; LPS lipid A biosynthesis. In terms of biological role, catalyzes the N-acylation of UDP-3-O-acylglucosamine using 3-hydroxyacyl-ACP as the acyl donor. Is involved in the biosynthesis of lipid A, a phosphorylated glycolipid that anchors the lipopolysaccharide to the outer membrane of the cell. In Burkholderia vietnamiensis (strain G4 / LMG 22486) (Burkholderia cepacia (strain R1808)), this protein is UDP-3-O-acylglucosamine N-acyltransferase.